A 3672-amino-acid polypeptide reads, in one-letter code: Laminin-like protein epi-1 (3672 aa).

An N-terminal signal peptide occupies residues 1–27; it reads MSPYDSSPWATKALFLIVTLLAQFTYS. The region spanning 28–297 is the Laminin N-terminal domain; that stretch reads QVLTPSQITI…AIKEIMIGGR (270 aa). Residues Asn-121, Asn-140, and Asn-249 are each glycosylated (N-linked (GlcNAc...) asparagine). 43 cysteine pairs are disulfide-bonded: Cys-298-Cys-307, Cys-300-Cys-320, Cys-322-Cys-331, Cys-334-Cys-354, Cys-357-Cys-366, Cys-359-Cys-391, Cys-394-Cys-403, Cys-406-Cys-424, Cys-427-Cys-438, Cys-429-Cys-445, Cys-447-Cys-456, Cys-459-Cys-469, Cys-472-Cys-484, Cys-474-Cys-491, Cys-493-Cys-502, Cys-505-Cys-516, Cys-519-Cys-531, Cys-521-Cys-538, Cys-540-Cys-549, Cys-552-Cys-561, Cys-564-Cys-576, Cys-566-Cys-583, Cys-585-Cys-594, Cys-597-Cys-607, Cys-610-Cys-622, Cys-612-Cys-629, Cys-631-Cys-640, Cys-643-Cys-653, Cys-656-Cys-668, Cys-658-Cys-674, Cys-676-Cys-685, Cys-688-Cys-698, Cys-701-Cys-715, Cys-703-Cys-724, Cys-726-Cys-735, Cys-738-Cys-753, Cys-756-Cys-770, Cys-758-Cys-777, Cys-779-Cys-788, Cys-791-Cys-806, Cys-809-Cys-821, Cys-811-Cys-828, and Cys-830-Cys-839. 10 consecutive Laminin EGF-like domains span residues 298–356, 357–426, 427–471, 472–518, 519–563, 564–609, 610–655, 656–700, 701–755, and 756–808; these read CVCN…TCEA, CNCF…PCKV, CDCD…KCKP, CECN…GCVE, CVCD…DCKF, CNCD…NCKA, CACD…DCRG, CECL…ICEE, CNCN…GCRS, and CDCN…GCES. The N-linked (GlcNAc...) asparagine glycan is linked to Asn-351. Residue Asn-477 is glycosylated (N-linked (GlcNAc...) asparagine). Asn-511 and Asn-530 each carry an N-linked (GlcNAc...) asparagine glycan. N-linked (GlcNAc...) asparagine glycosylation is present at Asn-634. Asn-761 carries an N-linked (GlcNAc...) asparagine glycan. In terms of domain architecture, Laminin EGF-like 11; truncated spans 809-839; it reads CHCDIGGALRAECDITSGQCKCRPRVTGLRC. Residues Asn-1014 and Asn-1341 are each glycosylated (N-linked (GlcNAc...) asparagine). 16 cysteine pairs are disulfide-bonded: Cys-1415/Cys-1427, Cys-1417/Cys-1434, Cys-1436/Cys-1445, Cys-1448/Cys-1458, Cys-1461/Cys-1469, Cys-1463/Cys-1476, Cys-1478/Cys-1487, Cys-1490/Cys-1503, Cys-1506/Cys-1520, Cys-1508/Cys-1527, Cys-1529/Cys-1538, Cys-1541/Cys-1551, Cys-1554/Cys-1566, Cys-1556/Cys-1573, Cys-1575/Cys-1584, and Cys-1587/Cys-1602. Laminin EGF-like domains follow at residues 1415–1460, 1461–1505, 1506–1553, and 1554–1604; these read CDCV…ECIK, CQCN…GCQK, CGCH…HCYG, and CSCN…GCVN. In terms of domain architecture, Laminin EGF-like 16; first part spans 1605–1614; that stretch reads CFCFGVTDSC. Residues 1615 to 1796 enclose the Laminin IV type A domain; that stretch reads RSSMYPVTIM…SVIKASSVEQ (182 aa). N-linked (GlcNAc...) asparagine glycans are attached at residues Asn-1705 and Asn-1756. Residues 1797 to 1829 form the Laminin EGF-like 16; second part domain; sequence CQCPAPYTGPSCQLCASGYHRVQSGSFLGACVP. Disulfide bonds link Cys-1830/Cys-1839, Cys-1832/Cys-1846, Cys-1849/Cys-1858, Cys-1861/Cys-1877, Cys-1880/Cys-1894, Cys-1882/Cys-1905, Cys-1907/Cys-1916, Cys-1919/Cys-1934, Cys-1937/Cys-1951, Cys-1939/Cys-1958, Cys-1961/Cys-1970, Cys-1973/Cys-1987, Cys-1990/Cys-2000, Cys-1992/Cys-2007, Cys-2009/Cys-2018, Cys-2021/Cys-2031, Cys-2037/Cys-2048, Cys-2039/Cys-2055, Cys-2057/Cys-2066, Cys-2069/Cys-2081, Cys-2084/Cys-2096, Cys-2086/Cys-2103, Cys-2105/Cys-2114, and Cys-2117/Cys-2129. 6 Laminin EGF-like domains span residues 1830-1879, 1880-1936, 1937-1989, 1990-2036, 2037-2083, and 2084-2131; these read CECN…DCMA, CACP…SCSP, CQCN…NCSS, CECS…GCQG, CHCG…GCDK, and CDCE…GCRR. The N-linked (GlcNAc...) asparagine glycan is linked to Asn-1868. An N-linked (GlcNAc...) asparagine glycan is attached at Asn-1944. The N-linked (GlcNAc...) asparagine glycan is linked to Asn-1986. Asn-2002 carries an N-linked (GlcNAc...) asparagine glycan. N-linked (GlcNAc...) asparagine glycosylation is found at Asn-2159, Asn-2207, Asn-2231, Asn-2235, Asn-2401, Asn-2421, Asn-2487, and Asn-2821. Laminin G-like domains are found at residues 2693–2884, 2896–3066, and 3072–3235; these read GAHF…VNGA, ELVV…RSGC, and RTVS…LNGC. An intrachain disulfide couples Cys-3040 to Cys-3066. The N-linked (GlcNAc...) asparagine glycan is linked to Asn-3087. A disulfide bond links Cys-3209 and Cys-3235. The interval 3236 to 3294 is disordered; the sequence is SLSDDENISTTTTAAPKPTDDSDVAVLPIDEEEESTTTTTTTTTEEPTEEPAEARPDGH. Residue Asn-3242 is glycosylated (N-linked (GlcNAc...) asparagine). Low complexity predominate over residues 3271–3280; sequence TTTTTTTTTE. 2 Laminin G-like domains span residues 3310–3482 and 3488–3669; these read GFNF…TEQC and PGMY…RNAC. A disulfide bridge connects residues Cys-3460 and Cys-3482. Asn-3541 carries N-linked (GlcNAc...) asparagine glycosylation. A disulfide bond links Cys-3633 and Cys-3669.

In terms of assembly, laminin is a complex glycoprotein, consisting of three different polypeptide chains (alpha, beta, gamma), which are bound to each other by disulfide bonds into a cross-shaped molecule comprising one long and three short arms with globules at each end.

The protein resides in the secreted. The protein localises to the extracellular space. It is found in the extracellular matrix. Its subcellular location is the basement membrane. Binding to cells via a high affinity receptor, laminin is thought to mediate the attachment, migration and organization of cells into tissues during embryonic development by interacting with other extracellular matrix components. Required to assemble a stable basement membrane and for organizing receptor complexes and cytoskeletal components to the proper cell surfaces. During embryogenesis, does not require the presence of collagen type IV in order to associate with cell surfaces, prior to assembly of the prototypical basement membrane. During the formation of neuromuscular junctions at the larval stage, negatively regulates membrane protrusion from body wall muscles, probably downstream of the integrin complex formed by pat-2 and pat-3. Probably plays a distinct role from the related laminin subunit alpha lam-3. In Caenorhabditis elegans, this protein is Laminin-like protein epi-1 (epi-1).